A 214-amino-acid polypeptide reads, in one-letter code: Pyrrolidone-carboxylate peptidase (214 aa).

Active-site residues include glutamate 80, cysteine 143, and histidine 166.

This sequence belongs to the peptidase C15 family. Homotetramer.

The protein resides in the cytoplasm. The catalysed reaction is Release of an N-terminal pyroglutamyl group from a polypeptide, the second amino acid generally not being Pro.. Functionally, removes 5-oxoproline from various penultimate amino acid residues except L-proline. In Escherichia fergusonii (strain ATCC 35469 / DSM 13698 / CCUG 18766 / IAM 14443 / JCM 21226 / LMG 7866 / NBRC 102419 / NCTC 12128 / CDC 0568-73), this protein is Pyrrolidone-carboxylate peptidase.